The sequence spans 150 residues: Large ribosomal subunit protein bL9 (150 aa).

It belongs to the bacterial ribosomal protein bL9 family.

Binds to the 23S rRNA. In Neisseria meningitidis serogroup C (strain 053442), this protein is Large ribosomal subunit protein bL9.